Here is a 1858-residue protein sequence, read N- to C-terminus: MSLDPSSFPRSNSPASSDSSLTRSRLRGKEGSLKKDKNYRRYASSVERALSLFDNTLQEWADYISFLSRLLKALQTHPPDQPVVPHKVLVAKRLSQSMNPSLPSGVHQKALEVYTYIFNLIKPEGLSHDLPLYYPGIAPTLTFASLTVRPLFLSLVETYVCDLEPWAIRPALKAIILSLLPGLEEETSDDFDSTLRLLNTLREIASRMDTQRPGAETNSSGQYFWQCFFLASITSPSRRLGILAYLNRYLPKLGVTDRRPSRHEEVDATAMPLEMQVAVDSVILPEPGLLIRCFATGLTDEQVLVQRNFLDLLVTHLPLSSPILQTRITKDDLQRLIVAAAGVVSRRDMSLNRRLWAWLLGPDPVGDRASFEARPSISSTASKTAAESEELSQSQYFSRFGLQPLASGLLQLLKRDTELPSEKAKPFRITLSLMDRWEVGGHVVPAVFLPFMRSVKAYKLAAPKAHFDEVFRSATSFFDGVESGMIFSELLNLIDWDAKSLANDAPRILDNLNLAHFILDHFNVREEDMVLNHAPLLTLAALIKMSELSSEATTSVAHDQLQAVSNGLSKVVTLLTGLLIDRAFLRKSDSKNSVNEPSMLLDRPGSAILRQIHQFYDRSRNSLDLQPPPFPPTDLADLIIKNVYEQAISAVNACNDAKSIPERLNLLIVVLKKLPRSRILRDKRLYVAIGKHIQASTVELSTASFSHLSSMSTTITSLYCIHKLGYYITYEEVSDLIPPLVRQLWQFLSPLSPKFHVEAVRCLWNLHSVSWSDHLVESTITSLMFTPPAPGSYQLSSEEEAGRYFILWNHSHHGTYELPPKNLQDSAQSQASYHSSMLERPLFTVLDLLSQGSTQPAQVVQLWLQDLPSVAKVFRIIISKLEGVLHRGNQLGTFEGNTVVSPDDYAECNYLFETIHNVLGALNHNGWVSLLTQTMAHNSRRHDASASEDNAEAPSLHSVVFQASLKIVSGYKSGTATANAEEVKLQQISLLVMRQLLLGPGVEELVESGIDSLLVDRLYSMLDEGGDIAIQAALIDTLLAVLKARFSQAYLPPPPTKPKHQRGGSREKLTSPSLLSFTSDKPEKSSVLLPSPEPPQRLLDCLLKGLSSPRSRAIIDKWIMLLCEILPIYSTCIFQILLTLVDCLGREIRQSYTNLQSAFEKTEGWPKDRPEQTTISLLTGFETCIAAAHERLLMEEVNAPAAKSPDQTHGFFGNMVSGVFASDSNHPRSAAMNNRLTVLLSFQDAVRLCFSIWSWGAAERSSLPQDTESIASFQYTSLRMRNRSRRILEHLFTAEALECLETMVDMWIKSDRDTSPLIFNLLHTLDGSRPKIAIPAIFNAIYTRTNPAALDPSRKSTMTTALTETELAGFLVTYARSLDDDVLDEIWIDCTTFLRDVLSNPFPHRQILPRLVEFAAILGVKLENTNFGEDRRMRKELGDVILRLLTAIFTSKPMGFTQEQGLLGRASLDYDSSSIQRIGPDDMLSILVASMPAFSMTLGDMDRITTAVSNISTNIIGPFIRARLFPNNLNTSFMALMQHISKIPQVAKVWKKDVADAFNDPRFFGSQLDLVKGGWMTLLRQWALVDKDRLSEIMTRLTPPATAGIMFGVGASAARLDADRKAQLNLRRISLLVLSTAEDYFIAEMPALLQKLEDLLGATASSSPSSATRAEIFMVLRALILKSTTTTLSPFWPLINSELQEAISAISSGNQQELYNPYSLLQACKLLDTLLVLAPDDFQLLEWLYVTDTVDAIYPPEQFEPTALADEVSHNLGVRWSTSSDPTRESTNLHHGVRYPGLAADWIRETAKDEIVDRVLRPFFDQLSIHAFESTYSISNPNLEACRDDLLADLFNESTMAN.

Over residues 1–23 (MSLDPSSFPRSNSPASSDSSLTR) the composition is skewed to low complexity. 2 disordered regions span residues 1-33 (MSLD…EGSL) and 1052-1092 (PPPP…LPSP). Residues 1070 to 1079 (TSPSLLSFTS) are compositionally biased toward polar residues. Positions 1838 to 1854 (NLEACRDDLLADLFNES) are transactivation.

The protein belongs to the DOP1 family.

The protein localises to the golgi apparatus membrane. Functionally, involved in cellular morphogenesis. Required for traffic between late Golgi and early endosomes, and for the normal structure and organization of the endoplasmic reticulum. During the vegetative phase, contributes to the highly polarized hyphal growth. Required for the reproductive cycle. Involved in conidiophore initiation and differentiation. May have a role in controlling the balance between vegetative proliferation and developmental morphogenesis. The protein is Protein dop1 (dop1) of Emericella nidulans (strain FGSC A4 / ATCC 38163 / CBS 112.46 / NRRL 194 / M139) (Aspergillus nidulans).